A 101-amino-acid polypeptide reads, in one-letter code: NAD(P)H-quinone oxidoreductase subunit 4L, chloroplastic (101 aa).

Helical transmembrane passes span 2–22 (MLEH…YGLI), 32–52 (MCLE…SDFF), and 61–81 (IFSI…LAIV).

The protein belongs to the complex I subunit 4L family. As to quaternary structure, NDH is composed of at least 16 different subunits, 5 of which are encoded in the nucleus.

It localises to the plastid. Its subcellular location is the chloroplast thylakoid membrane. The enzyme catalyses a plastoquinone + NADH + (n+1) H(+)(in) = a plastoquinol + NAD(+) + n H(+)(out). The catalysed reaction is a plastoquinone + NADPH + (n+1) H(+)(in) = a plastoquinol + NADP(+) + n H(+)(out). Functionally, NDH shuttles electrons from NAD(P)H:plastoquinone, via FMN and iron-sulfur (Fe-S) centers, to quinones in the photosynthetic chain and possibly in a chloroplast respiratory chain. The immediate electron acceptor for the enzyme in this species is believed to be plastoquinone. Couples the redox reaction to proton translocation, and thus conserves the redox energy in a proton gradient. The polypeptide is NAD(P)H-quinone oxidoreductase subunit 4L, chloroplastic (Guizotia abyssinica (Niger)).